The sequence spans 479 residues: Mannose-1-phosphate guanylyltransferase RfbM (479 aa).

Belongs to the mannose-6-phosphate isomerase type 2 family. Homodimer.

It catalyses the reaction alpha-D-mannose 1-phosphate + GTP + H(+) = GDP-alpha-D-mannose + diphosphate. The protein operates within nucleotide-sugar biosynthesis; GDP-alpha-D-mannose biosynthesis; GDP-alpha-D-mannose from alpha-D-mannose 1-phosphate (GTP route): step 1/1. It functions in the pathway bacterial outer membrane biogenesis; LPS O-antigen biosynthesis. Functionally, involved in GDP-mannose biosynthesis which serves as the activated sugar nucleotide precursor for mannose residues in cell surface polysaccharides. This enzyme participates in synthesis of the LPS group B O antigen. This chain is Mannose-1-phosphate guanylyltransferase RfbM (rfbM), found in Salmonella typhimurium (strain LT2 / SGSC1412 / ATCC 700720).